Consider the following 333-residue polypeptide: Probable tRNA pseudouridine synthase B (333 aa).

Catalysis depends on Asp66, which acts as the Nucleophile. One can recognise a PUA domain in the interval 233–308 (LKKIIVKDSA…EVVEITRVIM (76 aa)).

The protein belongs to the pseudouridine synthase TruB family. Type 2 subfamily.

The enzyme catalyses uridine(55) in tRNA = pseudouridine(55) in tRNA. Its function is as follows. Could be responsible for synthesis of pseudouridine from uracil-55 in the psi GC loop of transfer RNAs. The sequence is that of Probable tRNA pseudouridine synthase B from Methanococcus maripaludis (strain C6 / ATCC BAA-1332).